Here is a 189-residue protein sequence, read N- to C-terminus: MVKVIASSLRKGNVVDIDDKLYVVLTAENIHPGKGTPVTQLDMRRISDGVKISERYRTTEQVERAFVEDRPHTFLYEDSDGYTFMNPENFDQVIVTKDVMGDSAVYLQEGMECMLSTHNGVPIAIELPARVTLEIVDTEPTVKGQTASSSYKPAKLSNGVRTMVPPHISAGTRVVIMTADNSYVERAKD.

Belongs to the elongation factor P family.

It localises to the cytoplasm. Its pathway is protein biosynthesis; polypeptide chain elongation. Functionally, involved in peptide bond synthesis. Stimulates efficient translation and peptide-bond synthesis on native or reconstituted 70S ribosomes in vitro. Probably functions indirectly by altering the affinity of the ribosome for aminoacyl-tRNA, thus increasing their reactivity as acceptors for peptidyl transferase. This chain is Elongation factor P, found in Xanthobacter autotrophicus (strain ATCC BAA-1158 / Py2).